We begin with the raw amino-acid sequence, 205 residues long: Ribonuclease HII (205 aa).

The region spanning 14 to 201 (EIIAGVDEAG…KGNINHSAIL (188 aa)) is the RNase H type-2 domain. Residues aspartate 20, glutamate 21, and aspartate 111 each contribute to the a divalent metal cation site.

Belongs to the RNase HII family. It depends on Mn(2+) as a cofactor. Requires Mg(2+) as cofactor.

It is found in the cytoplasm. The enzyme catalyses Endonucleolytic cleavage to 5'-phosphomonoester.. Functionally, endonuclease that specifically degrades the RNA of RNA-DNA hybrids. This Orientia tsutsugamushi (strain Ikeda) (Rickettsia tsutsugamushi) protein is Ribonuclease HII.